The sequence spans 1603 residues: DNA polymerase theta (1603 aa).

Residues 38-208 (EARQFEDQHL…WLDGAKVFEA (171 aa)) enclose the Helicase ATP-binding domain. Residue 51-58 (APTSAGKS) participates in ATP binding. A DEAH box motif is present at residues 149–152 (DEMH). The Helicase C-terminal domain maps to 283-434 (TDSSLLEILK…GVLTRKRDAE (152 aa)).

This sequence belongs to the DNA polymerase type-A family.

The protein localises to the nucleus. It catalyses the reaction DNA(n) + a 2'-deoxyribonucleoside 5'-triphosphate = DNA(n+1) + diphosphate. In terms of biological role, DNA polymerase that promotes microhomology-mediated end-joining (MMEJ), an alternative non-homologous end-joining (NHEJ) machinery triggered in response to double-strand breaks in DNA. MMEJ is an error-prone repair pathway that produces deletions of sequences from the strand being repaired and promotes genomic rearrangements, such as telomere fusions. Required to prevent extensive loss of sequences near G-quadruplex (G4) DNA sites, which are prone to cause genome alterations, by generating deletions. The protein is DNA polymerase theta of Caenorhabditis elegans.